Reading from the N-terminus, the 527-residue chain is MAAAGAVLPEQIAAMWEQVKAPVVVPLLRLSVAACLAMSVMLFVEKVYMSVVLVGVHLFGRRPDRRYRCDPIVAAGADNDDPELADANAAFPMVLIQIPMYNEREVYKLSIGAACGLSWPSDRVIVQVLDDSTDPVIKEMVQVECKRWESKGVRIKYEIRDNRVGYKAGALREGMKHGYVRDCDYVAIFDADFQPDPDFLARTIPFLVHNPDIALVQARWKFVNANECLMTRMQEMSLDYHFKVEQEVGSSTHAFFGFNGTAGVWRISAMNEAGGWKDRTTVEDMDLAVRAGLKGWKFVYLGDLMVKSELPSTFKAFRYQQHRWSCGPANLFRKMLVEIATNKKVTLWKKIYVIYNFFLVRKIIGHIVTFVFYCLVVPATVLIPEVEIPRWGYVYLPSIVTILNSIGTPRSLHLLIFWVLFENVMSLHRTKATLIGLLETGRVNEWVVTEKLGDALKLKLPGKAFRRPRMRIGDRVNALELGFSAYLSFCGCYDIAYGKGYYSLFLFLQSITFFIIGVGYVGTIVPH.

Residues 37 to 59 (AMSVMLFVEKVYMSVVLVGVHLF) traverse the membrane as a helical segment. Residue Asp131 is part of the active site. Asp190 and Asp192 together coordinate substrate. Asp284 is an active-site residue. 4 helical membrane-spanning segments follow: residues 363–383 (IIGHIVTFVFYCLVVPATVLI), 399–419 (IVTILNSIGTPRSLHLLIFWV), 478–498 (ALELGFSAYLSFCGCYDIAYG), and 505–525 (FLFLQSITFFIIGVGYVGTIV).

The protein belongs to the glycosyltransferase 2 family. Plant cellulose synthase-like A subfamily.

Its subcellular location is the golgi apparatus membrane. The enzyme catalyses GDP-mannose + (glucomannan)n = GDP + (glucomannan)n+1.. Functionally, probable mannan synthase which consists of a 4-beta-mannosyltransferase activity on mannan using GDP-mannose. The beta-1,4-mannan product is the backbone for galactomannan synthesis by galactomannan galactosyltransferase. Galactomannan is a noncellulosic polysaccharides of plant cell wall. This chain is Probable glucomannan 4-beta-mannosyltransferase 9, found in Oryza sativa subsp. japonica (Rice).